The following is a 293-amino-acid chain: 4-diphosphocytidyl-2-C-methyl-D-erythritol kinase (293 aa).

Residue lysine 16 is part of the active site. 99 to 109 contacts ATP; the sequence is PMGAGLGGGSS. Residue aspartate 141 is part of the active site.

It belongs to the GHMP kinase family. IspE subfamily.

The catalysed reaction is 4-CDP-2-C-methyl-D-erythritol + ATP = 4-CDP-2-C-methyl-D-erythritol 2-phosphate + ADP + H(+). Its pathway is isoprenoid biosynthesis; isopentenyl diphosphate biosynthesis via DXP pathway; isopentenyl diphosphate from 1-deoxy-D-xylulose 5-phosphate: step 3/6. In terms of biological role, catalyzes the phosphorylation of the position 2 hydroxy group of 4-diphosphocytidyl-2C-methyl-D-erythritol. This Burkholderia cenocepacia (strain HI2424) protein is 4-diphosphocytidyl-2-C-methyl-D-erythritol kinase.